A 459-amino-acid chain; its full sequence is Probable 1,4-beta-D-glucan cellobiohydrolase C (459 aa).

Positions 1 to 18 (MHYPLSLALAFLPFGIQA) are cleaved as a signal peptide. The 36-residue stretch at 19–54 (QQTLWGQCGGQGYSGATSCVAGATCATVNEYYAQCT) folds into the CBM1 domain. 2 disulfides stabilise this stretch: cysteine 26–cysteine 43 and cysteine 37–cysteine 53. Residues 54 to 94 (TPAAGTSSATTLKTTTSSTTAAVTTTTTTQSPTGSASPTTT) are thr-rich linker. A disordered region spans residues 76 to 97 (VTTTTTTQSPTGSASPTTTASA). A catalytic region spans residues 95–459 (ASASGNPFSG…QLLTNANPAF (365 aa)). The active site involves aspartate 189. The cysteines at positions 190 and 249 are disulfide-linked. Aspartate 235 (proton donor) is an active-site residue. N-linked (GlcNAc...) asparagine glycosylation occurs at asparagine 303. Cysteines 381 and 428 form a disulfide. Aspartate 414 functions as the Nucleophile in the catalytic mechanism.

It belongs to the glycosyl hydrolase 6 (cellulase B) family.

The protein resides in the secreted. The enzyme catalyses Hydrolysis of (1-&gt;4)-beta-D-glucosidic linkages in cellulose and cellotetraose, releasing cellobiose from the non-reducing ends of the chains.. In terms of biological role, the biological conversion of cellulose to glucose generally requires three types of hydrolytic enzymes: (1) Endoglucanases which cut internal beta-1,4-glucosidic bonds; (2) Exocellobiohydrolases that cut the disaccharide cellobiose from the non-reducing end of the cellulose polymer chain; (3) Beta-1,4-glucosidases which hydrolyze the cellobiose and other short cello-oligosaccharides to glucose. This Aspergillus niger (strain ATCC MYA-4892 / CBS 513.88 / FGSC A1513) protein is Probable 1,4-beta-D-glucan cellobiohydrolase C (cbhC).